The primary structure comprises 540 residues: Signal peptide peptidase-like 2 (540 aa).

An N-terminal signal peptide occupies residues 1–27 (MDSLRFLRILLLSSSILLLSLRSTVTA). At 28-196 (GDIVHQDNLA…PRRPAVDVAE (169 aa)) the chain is on the lumenal side. N-linked (GlcNAc...) asparagine glycosylation is present at Asn-83. One can recognise a PA domain in the interval 95 to 173 (SCTPLKNKLS…QDAGASLQKM (79 aa)). The N-linked (GlcNAc...) asparagine glycan is linked to Asn-176. The helical transmembrane segment at 197–217 (VFLWLMAIGTILCASYWSAWS) threads the bilayer. Residues 218-248 (AREAAIEHDKLLKDAIDEIPNTNDGGSGVVE) lie on the Cytoplasmic side of the membrane. Residues 249 to 269 (INSISAIFFVVLASGFLVILY) traverse the membrane as a helical segment. At 270-278 (KLMSYWFVE) the chain is on the lumenal side. The chain crosses the membrane as a helical span at residues 279 to 299 (LLVVVFCIGGVEGLQTCLVAL). Residues 300–319 (LSRWFQRAADTYVKVPFLGP) are Cytoplasmic-facing. A helical membrane pass occupies residues 320–340 (ISYLTLAVSPFCIVFAVLWAV). Residues 341–345 (YRVHS) are Lumenal-facing. Residues 346-366 (FAWIGQDVLGIALIITVLQIV) form a helical membrane-spanning segment. The Cytoplasmic segment spans residues 367-370 (HVPN). Residues 371–391 (LKVGTVLLSCAFLYDIFWVFV) form a helical membrane-spanning segment. Residue Asp-385 is part of the active site. Residues 392 to 429 (SKKLFHESVMIVVARGDKSGEDGIPMLLKIPRMFDPWG) are Lumenal-facing. Residues 430 to 450 (GYSIIGFGDILLPGLLIAFAL) form a helical membrane-spanning segment. Residue Asp-438 is part of the active site. Topologically, residues 451–462 (RYDWLANKTLRT) are cytoplasmic. Residues 463–483 (GYFIWAMVAYGLGLLITYVAL) form a helical membrane-spanning segment. Residues 484–488 (NLMDG) are Lumenal-facing. The helical transmembrane segment at 489 to 509 (HGQPALLYIVPFTLGTMLTLA) threads the bilayer. A PAL motif is present at residues 492 to 494 (PAL). At 510-540 (RKRDDLWILWTKGEPERACPHHVRLEQCSEK) the chain is on the cytoplasmic side.

The protein belongs to the peptidase A22B family. Glycosylated. As to expression, ubiquitous.

It is found in the endosome membrane. Its function is as follows. Intramembrane-cleaving aspartic protease (I-CLiP) that cleaves type II membrane signal peptides in the hydrophobic plane of the membrane. The chain is Signal peptide peptidase-like 2 (SPPL2) from Arabidopsis thaliana (Mouse-ear cress).